Reading from the N-terminus, the 388-residue chain is Chorismate synthase (388 aa).

NADP(+) contacts are provided by Arg39 and Arg45. FMN contacts are provided by residues Arg130–Ser132, Asn251–Ala252, Gly296, Lys311–Thr315, and Arg337.

It belongs to the chorismate synthase family. As to quaternary structure, homotetramer. Requires FMNH2 as cofactor.

It carries out the reaction 5-O-(1-carboxyvinyl)-3-phosphoshikimate = chorismate + phosphate. The protein operates within metabolic intermediate biosynthesis; chorismate biosynthesis; chorismate from D-erythrose 4-phosphate and phosphoenolpyruvate: step 7/7. Functionally, catalyzes the anti-1,4-elimination of the C-3 phosphate and the C-6 proR hydrogen from 5-enolpyruvylshikimate-3-phosphate (EPSP) to yield chorismate, which is the branch point compound that serves as the starting substrate for the three terminal pathways of aromatic amino acid biosynthesis. This reaction introduces a second double bond into the aromatic ring system. The chain is Chorismate synthase from Streptococcus mutans serotype c (strain ATCC 700610 / UA159).